The primary structure comprises 23 residues: Apolipophorin-1 (23 aa).

Basic and acidic residues predominate over residues 1-15 (SVKSEVDNFDKHLKA). A disordered region spans residues 1–23 (SVKSEVDNFDKHLKAESAPFNNE).

In terms of tissue distribution, expressed in hemolymph.

The protein localises to the secreted. Its function is as follows. Constitutes the major component of lipophorin, which mediates transport for various types of lipids in hemolymph. Acts by forming lipoprotein particles that bind lipoproteins and lipids. This Galleria mellonella (Greater wax moth) protein is Apolipophorin-1.